The chain runs to 105 residues: Thioredoxin (105 aa).

Residues 2–105 enclose the Thioredoxin domain; the sequence is VKIVGDLTEF…KLEEAIKKYM (104 aa). Active-site nucleophile residues include cysteine 32 and cysteine 35. Residues cysteine 32 and cysteine 35 are joined by a disulfide bond. S-nitrosocysteine is present on residues cysteine 69 and cysteine 73.

It belongs to the thioredoxin family. May be nitrosylated on several cysteine residues, depending on the oxidation state. Nitrosylated Cys-73 may serve as donor for nitrosylation of target proteins.

It localises to the nucleus. The protein resides in the cytoplasm. Its subcellular location is the secreted. Participates in various redox reactions through the reversible oxidation of its active center dithiol to a disulfide and catalyzes dithiol-disulfide exchange reactions. Plays a role in the reversible S-nitrosylation of cysteine residues in target proteins, and thereby contributes to the response to intracellular nitric oxide. Nitrosylates the active site Cys of CASP3 in response to nitric oxide (NO), and thereby inhibits caspase-3 activity. Induces the FOS/JUN AP-1 DNA binding activity in ionizing radiation (IR) cells through its oxidation/reduction status and stimulates AP-1 transcriptional activity. The sequence is that of Thioredoxin (TXN) from Ophiophagus hannah (King cobra).